A 204-amino-acid polypeptide reads, in one-letter code: Copper-binding protein CutI (204 aa).

An N-terminal signal peptide occupies residues 1–26 (MLKKIALTLCPAIVGSLLFFTAPASA). Cu(2+) contacts are provided by His-27 and Glu-50. Over 27 to 178 (HVSVKPAESA…DDSENSGSSA (152 aa)) the chain is Extracellular. Residues 146-176 (PHSITNITSAKQVTDEHGATKTEDDSENSGS) are disordered. Over residues 147-157 (HSITNITSAKQ) the composition is skewed to polar residues. Positions 158 to 168 (VTDEHGATKTE) are enriched in basic and acidic residues. A helical transmembrane segment spans residues 179 to 199 (LDITAMVLSAAAIILSVAALV). Over 200-204 (KKKRA) the chain is Cytoplasmic.

It localises to the cell membrane. In terms of biological role, copper-binding protein that probably plays a role in copper homeostasis. May act as metallochaperone, possibly to facilitate copper uptake via the CutJ/YcnJ importer. Preferentially binds Cu in its oxidized Cu(II) state in a 1:1 stoichiometry. The sequence is that of Copper-binding protein CutI from Bacillus subtilis (strain 168).